A 358-amino-acid chain; its full sequence is tRNA-specific 2-thiouridylase MnmA (358 aa).

ATP-binding positions include 6–13 (AMSGGVDS) and Leu-32. The active-site Nucleophile is Cys-101. Cys-101 and Cys-193 are oxidised to a cystine. Gly-125 contacts ATP. An interaction with tRNA region spans residues 143–145 (KDQ). The Cysteine persulfide intermediate role is filled by Cys-193.

The protein belongs to the MnmA/TRMU family.

The protein resides in the cytoplasm. It catalyses the reaction S-sulfanyl-L-cysteinyl-[protein] + uridine(34) in tRNA + AH2 + ATP = 2-thiouridine(34) in tRNA + L-cysteinyl-[protein] + A + AMP + diphosphate + H(+). Catalyzes the 2-thiolation of uridine at the wobble position (U34) of tRNA, leading to the formation of s(2)U34. The sequence is that of tRNA-specific 2-thiouridylase MnmA from Mycobacterium leprae (strain Br4923).